A 209-amino-acid polypeptide reads, in one-letter code: dTTP/UTP pyrophosphatase (209 aa).

Catalysis depends on aspartate 79, which acts as the Proton acceptor.

The protein belongs to the Maf family. YhdE subfamily. A divalent metal cation serves as cofactor.

Its subcellular location is the cytoplasm. It catalyses the reaction dTTP + H2O = dTMP + diphosphate + H(+). The catalysed reaction is UTP + H2O = UMP + diphosphate + H(+). Nucleoside triphosphate pyrophosphatase that hydrolyzes dTTP and UTP. May have a dual role in cell division arrest and in preventing the incorporation of modified nucleotides into cellular nucleic acids. The chain is dTTP/UTP pyrophosphatase from Bradyrhizobium diazoefficiens (strain JCM 10833 / BCRC 13528 / IAM 13628 / NBRC 14792 / USDA 110).